We begin with the raw amino-acid sequence, 713 residues long: tRNA 5-methylaminomethyl-2-thiouridine biosynthesis bifunctional protein MnmC (713 aa).

Residues 1 to 300 form a tRNA (mnm(5)s(2)U34)-methyltransferase region; sequence MTAEPNKPCQ…MAAILSSATP (300 aa). Residues 306 to 713 are FAD-dependent cmnm(5)s(2)U34 oxidoreductase; that stretch reads IGGGLASAHL…LRKLLKGKAL (408 aa).

In the N-terminal section; belongs to the methyltransferase superfamily. tRNA (mnm(5)s(2)U34)-methyltransferase family. This sequence in the C-terminal section; belongs to the DAO family. FAD is required as a cofactor.

It localises to the cytoplasm. It catalyses the reaction 5-aminomethyl-2-thiouridine(34) in tRNA + S-adenosyl-L-methionine = 5-methylaminomethyl-2-thiouridine(34) in tRNA + S-adenosyl-L-homocysteine + H(+). In terms of biological role, catalyzes the last two steps in the biosynthesis of 5-methylaminomethyl-2-thiouridine (mnm(5)s(2)U) at the wobble position (U34) in tRNA. Catalyzes the FAD-dependent demodification of cmnm(5)s(2)U34 to nm(5)s(2)U34, followed by the transfer of a methyl group from S-adenosyl-L-methionine to nm(5)s(2)U34, to form mnm(5)s(2)U34. The chain is tRNA 5-methylaminomethyl-2-thiouridine biosynthesis bifunctional protein MnmC from Shewanella baltica (strain OS155 / ATCC BAA-1091).